The chain runs to 328 residues: Zinc chaperone YeiR (328 aa).

9 to 17 (GFLGSGKTT) is a binding site for GTP. Positions 63 to 66 (CMCC) match the CXCC motif motif. Asp155 is a GTP binding site. A CobW C-terminal domain is found at 241–321 (CGWIFDADTV…WNALQSALLK (81 aa)).

It belongs to the SIMIBI class G3E GTPase family. ZNG1 subfamily. In terms of assembly, oligomerizes in the presence of Zn(2+).

It catalyses the reaction GTP + H2O = GDP + phosphate + H(+). Its activity is regulated as follows. GTPase activity is enhanced by Zn(2+) binding. In terms of biological role, zinc chaperone that directly transfers zinc cofactor to target proteins, thereby activating them. Zinc is transferred from the CXCC motif in the GTPase domain to the zinc binding site in target proteins in a process requiring GTP hydrolysis. This Escherichia coli (strain K12) protein is Zinc chaperone YeiR (yeiR).